The primary structure comprises 208 residues: Large ribosomal subunit protein uL4 (208 aa).

Residues 45-78 (RQGTAKSKERSEMSGSTRKLGRQKGSGGARRGDI) are disordered.

This sequence belongs to the universal ribosomal protein uL4 family. Part of the 50S ribosomal subunit.

Its function is as follows. One of the primary rRNA binding proteins, this protein initially binds near the 5'-end of the 23S rRNA. It is important during the early stages of 50S assembly. It makes multiple contacts with different domains of the 23S rRNA in the assembled 50S subunit and ribosome. Forms part of the polypeptide exit tunnel. This chain is Large ribosomal subunit protein uL4, found in Azobacteroides pseudotrichonymphae genomovar. CFP2.